We begin with the raw amino-acid sequence, 399 residues long: Enoyl-[acyl-carrier-protein] reductase [NADH] (399 aa).

Residues 48-53 (GASTGY), 74-75 (FE), 111-112 (DA), and 139-140 (LA) contribute to the NAD(+) site. Residue Tyr225 coordinates substrate. The active-site Proton donor is Tyr235. Residues Lys244 and 274–276 (VVT) contribute to the NAD(+) site.

It belongs to the TER reductase family. Monomer.

The catalysed reaction is a 2,3-saturated acyl-[ACP] + NAD(+) = a (2E)-enoyl-[ACP] + NADH + H(+). It participates in lipid metabolism; fatty acid biosynthesis. Functionally, involved in the final reduction of the elongation cycle of fatty acid synthesis (FAS II). Catalyzes the reduction of a carbon-carbon double bond in an enoyl moiety that is covalently linked to an acyl carrier protein (ACP). This chain is Enoyl-[acyl-carrier-protein] reductase [NADH], found in Yersinia pestis bv. Antiqua (strain Antiqua).